The following is a 78-amino-acid chain: Large ribosomal subunit protein bL28 (78 aa).

Residues 1-22 form a disordered region; it reads MSKVCQVTGKRPTTGNNVSHAN. A compositionally biased stretch (polar residues) spans 11 to 22; that stretch reads RPTTGNNVSHAN.

The protein belongs to the bacterial ribosomal protein bL28 family.

The sequence is that of Large ribosomal subunit protein bL28 from Alkalilimnicola ehrlichii (strain ATCC BAA-1101 / DSM 17681 / MLHE-1).